The chain runs to 389 residues: Alpha-(1,3)-fucosyltransferase 7 (389 aa).

The Cytoplasmic segment spans residues methionine 1–proline 55. The chain crosses the membrane as a helical; Signal-anchor for type II membrane protein span at residues threonine 56–tryptophan 78. Residues leucine 79–alanine 389 are Lumenal-facing. A disulfide bridge links cysteine 115 with cysteine 123. N-linked (GlcNAc...) asparagine glycosylation is present at asparagine 128. Cysteine 258 and cysteine 261 are joined by a disulfide. Asparagine 338 is a glycosylation site (N-linked (GlcNAc...) asparagine). Residues cysteine 365 and cysteine 368 are joined by a disulfide bond.

This sequence belongs to the glycosyltransferase 10 family. In terms of processing, N-glycosylated. Highly expressed in lung and bone marrow and to a much lesser extent in spleen, salivary gland and skeletal muscle.

It localises to the golgi apparatus. The protein localises to the golgi stack membrane. It catalyses the reaction an N-acetyl-alpha-neuraminyl-(2-&gt;3)-beta-D-galactosyl-(1-&gt;4)-N-acetyl-beta-D-glucosaminyl derivative + GDP-beta-L-fucose = an alpha-Neu5Ac-(2-&gt;3)-beta-D-Gal-(1-&gt;4)-[alpha-L-Fuc-(1-&gt;3)]-beta-D-GlcNAc derivative + GDP + H(+). The catalysed reaction is an alpha-Neu5Ac-(2-&gt;3)-beta-D-Gal-(1-&gt;4)-beta-D-GlcNAc6S derivative + GDP-beta-L-fucose = an alpha-Neu5Ac-(2-&gt;3)-beta-D-Gal-(1-&gt;4)-[alpha-L-Fuc-(1-&gt;3)]-beta-D-GlcNAc6S derivative + GDP + H(+). The enzyme catalyses a neolactoside IV(3)-alpha-NeuAc-nLc4Cer + GDP-beta-L-fucose = a neolactoside IV(3)-alpha-NeuNAc,III(3)-alpha-Fuc-nLc4Cer + GDP + H(+). It carries out the reaction a neolactoside VI(3)-alpha-NeuNAc-nLc6Cer + GDP-beta-L-fucose = a neolactoside VI(3)-alpha-NeuAc,V(3)-alphaFuc-nLc6Cer + GDP + H(+). It catalyses the reaction an alpha-Neu5Ac-(2-&gt;3)-beta-D-Gal-(1-&gt;4)-beta-D-GlcNAc-(1-&gt;3)-beta-D-Gal-(1-&gt;4)-[alpha-L-Fuc-(1-&gt;3)]-beta-D-GlcNAc derivative + GDP-beta-L-fucose = an alpha-Neu5Ac-(2-&gt;3)-beta-D-Gal-(1-&gt;4)-[alpha-L-Fuc-(1-&gt;3)]-beta-D-GlcNAc-(1-&gt;3)-beta-D-Gal-(1-&gt;4)-[alpha-L-Fuc-(1-&gt;3)]-beta-D-GlcNAc derivative + GDP + H(+). The catalysed reaction is alpha-Neu5Ac-(2-&gt;3)-beta-D-Gal-(1-&gt;4)-beta-D-GlcNAc-(1-&gt;3)-beta-D-Gal-(1-&gt;4)-D-Glc + GDP-beta-L-fucose = alpha-Neu5Ac-(2-&gt;3)-beta-D-Gal-(1-&gt;4)-[alpha-L-Fuc-(1-&gt;3)]-beta-D-GlcNAc-(1-&gt;3)-beta-D-Gal-(1-&gt;4)-D-Glc + GDP + H(+). The enzyme catalyses alpha-Neu5Ac-(2-&gt;3)-beta-D-Gal-(1-&gt;4)-beta-D-GlcNAc-(1-&gt;3)-beta-D-Gal-(1-&gt;4)-[alpha-L-Fuc-(1-&gt;3)]-beta-D-GlcNAc-(1-&gt;3)-beta-D-Gal-(1-&gt;4)-beta-D-GlcNAc + GDP-beta-L-fucose = alpha-Neu5Ac-(2-&gt;3)-beta-D-Gal-(1-&gt;4)-[alpha-L-Fuc-(1-&gt;3)]-beta-D-GlcNAc-(1-&gt;3)-beta-D-Gal-(1-&gt;4)-[alpha-L-Fuc-(1-&gt;3)]-beta-D-GlcNAc-(1-&gt;3)-beta-D-Gal-(1-&gt;4)-beta-D-GlcNAc + GDP + H(+). It carries out the reaction alpha-Neu5Ac-(2-&gt;3)-beta-D-Gal-(1-&gt;4)-beta-D-GlcNAc-(1-&gt;3)-beta-D-Gal-(1-&gt;4)-beta-D-GlcNAc-(1-&gt;3)-beta-D-Gal-(1-&gt;4)-beta-D-GlcNAc + GDP-beta-L-fucose = alpha-Neu5Ac-(2-&gt;3)-beta-D-Gal-(1-&gt;4)-[alpha-L-Fuc-(1-&gt;3)]-beta-D-GlcNAc-(1-&gt;3)-beta-D-Gal-(1-&gt;4)-beta-D-GlcNAc-(1-&gt;3)-beta-D-Gal-(1-&gt;4)-beta-D-GlcNAc + GDP + H(+). It functions in the pathway protein modification; protein glycosylation. With respect to regulation, inhibited by NaCl. Inhibited by GDP in a concentration dependent manner, with an IC(50) value of 93 uM. Also inhibited by GMP and GTP. Inhibited by N-ethylmaleimide. Activated by poly(ethylene glycol) by enhancing the thermal stability of FUT7. Activated by Mn2+, Ca2+, and Mg2+. Both panosialin A and B inhibit activity with IC(50) values of 4.8 and 5.3 ug/ml, respectively. Inhibited by gallic acid (GA) and (-)-epigallocatechin gallate (EGCG) in a time-dependent and irreversible manner with IC(50) values of 60 and 700 nM, respectively. In terms of biological role, catalyzes the transfer of L-fucose, from a guanosine diphosphate-beta-L-fucose, to the N-acetyl glucosamine (GlcNAc) of a distal alpha2,3 sialylated lactosamine unit of a glycoprotein or a glycolipid-linked sialopolylactosamines chain through an alpha-1,3 glycosidic linkage and participates in the final fucosylation step in the biosynthesis of the sialyl Lewis X (sLe(x)), a carbohydrate involved in cell and matrix adhesion during leukocyte trafficking and fertilization. In vitro, also synthesizes sialyl-dimeric-Lex structures, from VIM-2 structures and both di-fucosylated and trifucosylated structures from mono-fucosylated precursors. However does not catalyze alpha 1-3 fucosylation when an internal alpha 1-3 fucosylation is present in polylactosamine chain and the fucosylation rate of the internal GlcNAc residues is reduced once fucose has been added to the distal GlcNAc. Also catalyzes the transfer of a fucose from GDP-beta-fucose to the 6-sulfated a(2,3)sialylated substrate to produce 6-sulfo sLex mediating significant L-selectin-dependent cell adhesion. Through sialyl-Lewis(x) biosynthesis, can control SELE- and SELP-mediated cell adhesion with leukocytes and allows leukocytes tethering and rolling along the endothelial tissue thereby enabling the leukocytes to accumulate at a site of inflammation. May enhance embryo implantation through sialyl Lewis X (sLeX)-mediated adhesion of embryo cells to endometrium. May affect insulin signaling by up-regulating the phosphorylation and expression of some signaling molecules involved in the insulin-signaling pathway through SLe(x) which is present on the glycans of the INSRR alpha subunit. The sequence is that of Alpha-(1,3)-fucosyltransferase 7 from Mus musculus (Mouse).